A 187-amino-acid polypeptide reads, in one-letter code: Ion-translocating oxidoreductase complex subunit B (187 aa).

The segment at 1–26 is hydrophobic; that stretch reads MTHILFAVLVLALLALAFGIILGFAA. A 4Fe-4S domain is found at 32-90; the sequence is EADPIVDQLDALLPQTQCGQCGYPGCKPYAEALANGDQINKCVPGGDATMRKIADLMGV. [4Fe-4S] cluster is bound by residues Cys-49, Cys-52, Cys-57, Cys-73, Cys-115, Cys-118, Cys-121, Cys-125, Cys-145, Cys-148, Cys-151, and Cys-155. 4Fe-4S ferredoxin-type domains are found at residues 106–135 and 136–165; these read KVAFIHEDQCIGCTKCIQACPVDAIVGATK and AMHTVITDECTGCDLCVDPCPTDCIEMIPV.

The protein belongs to the 4Fe4S bacterial-type ferredoxin family. RnfB subfamily. The complex is composed of six subunits: RnfA, RnfB, RnfC, RnfD, RnfE and RnfG. The cofactor is [4Fe-4S] cluster.

The protein localises to the cell inner membrane. Functionally, part of a membrane-bound complex that couples electron transfer with translocation of ions across the membrane. In Aeromonas salmonicida (strain A449), this protein is Ion-translocating oxidoreductase complex subunit B.